Here is a 164-residue protein sequence, read N- to C-terminus: Transcription elongation factor GreA (164 aa).

The protein belongs to the GreA/GreB family.

Its function is as follows. Necessary for efficient RNA polymerase transcription elongation past template-encoded arresting sites. The arresting sites in DNA have the property of trapping a certain fraction of elongating RNA polymerases that pass through, resulting in locked ternary complexes. Cleavage of the nascent transcript by cleavage factors such as GreA or GreB allows the resumption of elongation from the new 3'terminus. GreA releases sequences of 2 to 3 nucleotides. The chain is Transcription elongation factor GreA from Helicobacter pylori (strain Shi470).